We begin with the raw amino-acid sequence, 512 residues long: Transcriptional activator CadC (512 aa).

Residues 1–154 (MQQPVVRVGE…PPEQSPVKSK (154 aa)) are Cytoplasmic-facing. Positions 3–102 (QPVVRVGEWL…VPKRGYKLMV (100 aa)) form a DNA-binding region, ompR/PhoB-type. The helical transmembrane segment at 155–180 (RFTTFWVWFFFLLSLGICVALVAFSS) threads the bilayer. Residues 181–512 (LDTRLPMSKS…PYLDKFLASE (332 aa)) are Periplasmic-facing. A disulfide bond links C208 and C272.

In terms of assembly, homodimer. Dimerization of the periplasmic domain is required for activation of the cadBA operon. Interacts strongly with the lysine permease LysP in the absence of lysine or at low lysine concentrations. Interaction is markedly attenuated under increasing lysine levels. Concomitant pH-dependent protonation of periplasmic amino acids in both proteins dissolves their electrostatic connections resulting in further destabilization of the CadC/LysP interaction. In terms of processing, contains a functionally important disulfide bond, which may provide structural support for the pH-dependent activation via a switch of the sensor between the inactive and active state.

The protein localises to the cell inner membrane. With respect to regulation, activation of CadC requires two stimuli, lysine and low pH. CadC shows an extremely low affinity for lysine, and it senses the extracellular lysine not directly but indirectly via interaction with the lysine permease LysP. At a low external lysine concentration, CadC is inactivated by an interaction with LysP. When lysine is abundantly available, the interaction between LysP and CadC is released, and CadC becomes susceptible to activation by low pH. Acidification of the external milieu is sensed by protonation of a patch of acidic amino acids within the periplasmic domain and associated to conformational and/or oligomerization effects. The pH-dependent regulation may be due to the presence/absence of a disulfide bond within the periplasmic domain. At pH 7.6, a disulfide bond is found in the inactive state of CadC. At pH 5.8, disulfide bond formation is prevented, which transforms CadC into a semi-active state with respect to both the pH and the lysine stimuli. Activity is also feedback inhibited by cadaverine. Cadaverine binds first to the central cavity, which putatively triggers intramolecular rearrangements to expose the binding sites for cadaverine at the dimer interface, which inactivates CadC and consequently shuts off transcription of the cadBA operon. Functionally, regulates the lysine- and pH-dependent expression of the lysine decarboxylase CadA and the cadaverine-lysine antiporter CadB. At low external pH, and in the presence of external lysine, CadC activates transcription of the cadBA operon by binding directly to two sites, Cad1 and Cad2, within the cadBA promoter region (Pcad). Preferentially binds to AT-rich regions within the Cad1 promoter. This is Transcriptional activator CadC (cadC) from Escherichia coli (strain K12).